The sequence spans 95 residues: Aspartyl/glutamyl-tRNA(Asn/Gln) amidotransferase subunit C (95 aa).

This sequence belongs to the GatC family. As to quaternary structure, heterotrimer of A, B and C subunits.

It carries out the reaction L-glutamyl-tRNA(Gln) + L-glutamine + ATP + H2O = L-glutaminyl-tRNA(Gln) + L-glutamate + ADP + phosphate + H(+). The enzyme catalyses L-aspartyl-tRNA(Asn) + L-glutamine + ATP + H2O = L-asparaginyl-tRNA(Asn) + L-glutamate + ADP + phosphate + 2 H(+). Functionally, allows the formation of correctly charged Asn-tRNA(Asn) or Gln-tRNA(Gln) through the transamidation of misacylated Asp-tRNA(Asn) or Glu-tRNA(Gln) in organisms which lack either or both of asparaginyl-tRNA or glutaminyl-tRNA synthetases. The reaction takes place in the presence of glutamine and ATP through an activated phospho-Asp-tRNA(Asn) or phospho-Glu-tRNA(Gln). This chain is Aspartyl/glutamyl-tRNA(Asn/Gln) amidotransferase subunit C, found in Rhizobium etli (strain ATCC 51251 / DSM 11541 / JCM 21823 / NBRC 15573 / CFN 42).